The following is a 472-amino-acid chain: Serine/threonine-protein phosphatase T (472 aa).

TPR repeat units lie at residues 7–40 (ADKL…TKTP), 41–73 (TLFC…EPTF), and 74–107 (AKAY…APQN). Residues D217, H219, D246, and N278 each contribute to the Mn(2+) site. The Proton donor/acceptor role is filled by H279. Mn(2+) contacts are provided by H327 and H403.

The protein belongs to the PPP phosphatase family. PP-5 (PP-T) subfamily. Mg(2+) serves as cofactor. Mn(2+) is required as a cofactor.

It is found in the cytoplasm. It localises to the cytosol. The protein resides in the nucleus. It catalyses the reaction O-phospho-L-seryl-[protein] + H2O = L-seryl-[protein] + phosphate. The catalysed reaction is O-phospho-L-threonyl-[protein] + H2O = L-threonyl-[protein] + phosphate. Activated by arachidonic acid. Functionally, may function as a protein phosphatase. In Trypanosoma brucei brucei (strain 927/4 GUTat10.1), this protein is Serine/threonine-protein phosphatase T.